Consider the following 215-residue polypeptide: Probable transaldolase (215 aa).

Lysine 83 functions as the Schiff-base intermediate with substrate in the catalytic mechanism.

It belongs to the transaldolase family. Type 3B subfamily.

The protein resides in the cytoplasm. The enzyme catalyses D-sedoheptulose 7-phosphate + D-glyceraldehyde 3-phosphate = D-erythrose 4-phosphate + beta-D-fructose 6-phosphate. Its pathway is carbohydrate degradation; pentose phosphate pathway; D-glyceraldehyde 3-phosphate and beta-D-fructose 6-phosphate from D-ribose 5-phosphate and D-xylulose 5-phosphate (non-oxidative stage): step 2/3. Functionally, transaldolase is important for the balance of metabolites in the pentose-phosphate pathway. This is Probable transaldolase from Methanococcus maripaludis (strain C7 / ATCC BAA-1331).